Here is a 734-residue protein sequence, read N- to C-terminus: Photosystem I P700 chlorophyll a apoprotein A2 (734 aa).

A run of 8 helical transmembrane segments spans residues 46–69 (IFASHFGQLAIIFLWTSGNLFHVA), 135–158 (LYTGALFLLFLSAISLIAGWLHLQ), 175–199 (LNHHLSGLFGVSSLAWTGHLVHVAI), 273–291 (IAHHHLAIAFIFLVAGHMY), 330–353 (LHFQLGLALASLGVITSLVAQHMY), 369–395 (AALYTHHQYIAGFIMTGAFAHGAILVI), 417–439 (AIISHLSWASLFLGFHTLGLYVH), and 517–535 (FLVHHAIALGLHTTTLILV). Positions 559 and 568 each coordinate [4Fe-4S] cluster. 2 helical membrane passes run 575–596 (AFYLAVFWMLNTIGWVTFYWHW) and 643–665 (LSVWAWMFLFGHLVWATGFMFLI). Chlorophyll a-binding residues include histidine 654, methionine 662, and tyrosine 670. Residue tryptophan 671 coordinates phylloquinone. The chain crosses the membrane as a helical span at residues 707-727 (LVGLAHFSVGYIFTYAAFLIA).

It belongs to the PsaA/PsaB family. In terms of assembly, the PsaA/B heterodimer binds the P700 chlorophyll special pair and subsequent electron acceptors. PSI consists of a core antenna complex that captures photons, and an electron transfer chain that converts photonic excitation into a charge separation. The eukaryotic PSI reaction center is composed of at least 11 subunits. P700 is a chlorophyll a/chlorophyll a' dimer, A0 is one or more chlorophyll a, A1 is one or both phylloquinones and FX is a shared 4Fe-4S iron-sulfur center. is required as a cofactor.

It localises to the plastid. The protein resides in the chloroplast thylakoid membrane. The catalysed reaction is reduced [plastocyanin] + hnu + oxidized [2Fe-2S]-[ferredoxin] = oxidized [plastocyanin] + reduced [2Fe-2S]-[ferredoxin]. PsaA and PsaB bind P700, the primary electron donor of photosystem I (PSI), as well as the electron acceptors A0, A1 and FX. PSI is a plastocyanin-ferredoxin oxidoreductase, converting photonic excitation into a charge separation, which transfers an electron from the donor P700 chlorophyll pair to the spectroscopically characterized acceptors A0, A1, FX, FA and FB in turn. Oxidized P700 is reduced on the lumenal side of the thylakoid membrane by plastocyanin. In Atropa belladonna (Belladonna), this protein is Photosystem I P700 chlorophyll a apoprotein A2.